Here is a 348-residue protein sequence, read N- to C-terminus: Chaperone protein DnaJ (348 aa).

Residues 3 to 65 enclose the J domain; sequence DLYGILGVDH…EQRQRYDRHV (63 aa). The CR-type zinc finger occupies 109 to 191; it reads GGSQVVKIDS…CYGNGSRSAP (83 aa). The Zn(2+) site is built by C122, C125, C139, C142, C165, C168, C179, and C182. CXXCXGXG motif repeat units lie at residues 122–129, 139–146, 165–172, and 179–186; these read CDVCNGTR, CFDCNGSG, CSKCRGNG, and CRRCYGNG.

Belongs to the DnaJ family. In terms of assembly, homodimer. It depends on Zn(2+) as a cofactor.

The protein localises to the cytoplasm. Functionally, participates actively in the response to hyperosmotic and heat shock by preventing the aggregation of stress-denatured proteins and by disaggregating proteins, also in an autonomous, DnaK-independent fashion. Unfolded proteins bind initially to DnaJ; upon interaction with the DnaJ-bound protein, DnaK hydrolyzes its bound ATP, resulting in the formation of a stable complex. GrpE releases ADP from DnaK; ATP binding to DnaK triggers the release of the substrate protein, thus completing the reaction cycle. Several rounds of ATP-dependent interactions between DnaJ, DnaK and GrpE are required for fully efficient folding. Also involved, together with DnaK and GrpE, in the DNA replication of plasmids through activation of initiation proteins. The chain is Chaperone protein DnaJ from Tropheryma whipplei (strain TW08/27) (Whipple's bacillus).